The sequence spans 417 residues: MTEYLSVSTLTKYLKAKFERDPYLERVYLTGEISNFRRRPNHQYFALKDEGAVIQATMWAGQFRKLDFELEEGMKVLAIGRISIYPPSGSYSINIESLVPDGVGALALKFEQLKKKLAAEGLFDQRWKQNLPQFSKKIAVVTSPSGAVIRDIITTVQRRFPMSQIVLYPTKVQGAGAAEEISGNIRRANERGDFDVMIIGRGGGSIEDLWGFNEEIVVRAIFESRIPIISSVGHETDVTLADFVADSRAATPTAAAELATPNTKIDLINWANEQESRLFNRLTHLIKIRRERLEKLSQSVVFRQPERLYDGHVQKLDRLCERLTVLTENKVANMKHRYELSANRLIPTYSKIVESKKNKTEQLYQSLLLLDISKIKARGFSLITDENGKIIKSVSDVKKGQALDVELTDGQVKVEVK.

The protein belongs to the XseA family. In terms of assembly, heterooligomer composed of large and small subunits.

It is found in the cytoplasm. The catalysed reaction is Exonucleolytic cleavage in either 5'- to 3'- or 3'- to 5'-direction to yield nucleoside 5'-phosphates.. Functionally, bidirectionally degrades single-stranded DNA into large acid-insoluble oligonucleotides, which are then degraded further into small acid-soluble oligonucleotides. The sequence is that of Exodeoxyribonuclease 7 large subunit from Lactococcus lactis subsp. cremoris (strain MG1363).